We begin with the raw amino-acid sequence, 112 residues long: Mitochondrial import inner membrane translocase subunit TIM14-3 (112 aa).

The residue at position 2 (alanine 2) is an N-acetylalanine. The helical transmembrane segment at 6–28 threads the bilayer; sequence IAGAAVAAAAVAGRYGILAWQAF. The J domain occupies 53–112; that stretch reads EAALILGVRESVVADKVKEAHRRVMVANHPDAGGSHYLASKINEAKDMMLGKSNNSGSAF.

The protein belongs to the TIM14 family. In terms of assembly, probable component of the PAM complex at least composed of a mitochondrial HSP70 protein, TIMM44 and TIMM14. The complex interacts with the TIMM23 component of the TIM17:23 complex.

It is found in the mitochondrion. It localises to the mitochondrion inner membrane. Its function is as follows. Component of the PAM complex, a complex required for the translocation of transit peptide-containing proteins from the inner membrane into the mitochondrial matrix in an ATP-dependent manner. In Arabidopsis thaliana (Mouse-ear cress), this protein is Mitochondrial import inner membrane translocase subunit TIM14-3 (TIM14-3).